The following is a 553-amino-acid chain: Hydroxylamine reductase (553 aa).

The [2Fe-2S] cluster site is built by cysteine 3, cysteine 6, cysteine 18, and cysteine 25. Residues histidine 252, glutamate 276, cysteine 320, cysteine 408, cysteine 436, cysteine 461, glutamate 495, and lysine 497 each coordinate hybrid [4Fe-2O-2S] cluster. Cysteine 408 bears the Cysteine persulfide mark.

The protein belongs to the HCP family. Requires [2Fe-2S] cluster as cofactor. It depends on hybrid [4Fe-2O-2S] cluster as a cofactor.

It localises to the cytoplasm. The catalysed reaction is A + NH4(+) + H2O = hydroxylamine + AH2 + H(+). Its function is as follows. Catalyzes the reduction of hydroxylamine to form NH(3) and H(2)O. The polypeptide is Hydroxylamine reductase (Aliivibrio fischeri (strain ATCC 700601 / ES114) (Vibrio fischeri)).